A 249-amino-acid polypeptide reads, in one-letter code: Acetylglutamate kinase (249 aa).

Substrate-binding positions include 42–43, arginine 64, and asparagine 155; that span reads GG.

This sequence belongs to the acetylglutamate kinase family. ArgB subfamily.

It localises to the cytoplasm. It catalyses the reaction N-acetyl-L-glutamate + ATP = N-acetyl-L-glutamyl 5-phosphate + ADP. It functions in the pathway amino-acid biosynthesis; L-arginine biosynthesis; N(2)-acetyl-L-ornithine from L-glutamate: step 2/4. In terms of biological role, catalyzes the ATP-dependent phosphorylation of N-acetyl-L-glutamate. This is Acetylglutamate kinase from Endomicrobium trichonymphae.